The primary structure comprises 327 residues: Methionyl-tRNA formyltransferase (327 aa).

111 to 114 serves as a coordination point for (6S)-5,6,7,8-tetrahydrofolate; it reads SLLP.

It belongs to the Fmt family.

The enzyme catalyses L-methionyl-tRNA(fMet) + (6R)-10-formyltetrahydrofolate = N-formyl-L-methionyl-tRNA(fMet) + (6S)-5,6,7,8-tetrahydrofolate + H(+). In terms of biological role, attaches a formyl group to the free amino group of methionyl-tRNA(fMet). The formyl group appears to play a dual role in the initiator identity of N-formylmethionyl-tRNA by promoting its recognition by IF2 and preventing the misappropriation of this tRNA by the elongation apparatus. This chain is Methionyl-tRNA formyltransferase, found in Synechococcus elongatus (strain ATCC 33912 / PCC 7942 / FACHB-805) (Anacystis nidulans R2).